A 232-amino-acid polypeptide reads, in one-letter code: Platelet-activating factor acetylhydrolase IB subunit alpha1 (232 aa).

Positions 1-20 (MSGEGENPASKPTPVQDVQG) are disordered. Serine 2 carries the post-translational modification N-acetylserine. Serine 2 carries the post-translational modification Phosphoserine. Residues serine 48, aspartate 193, and histidine 196 contribute to the active site.

Belongs to the 'GDSL' lipolytic enzyme family. Platelet-activating factor acetylhydrolase IB beta/gamma subunits subfamily. As to quaternary structure, forms a catalytic dimer which is either homodimer (alpha1/alpha1 homodimer) or heterodimer with PAFAH1B2 (alpha1/alpha2 heterodimer). Component of the cytosolic (PAF-AH (I)) heterotetrameric enzyme, which is composed of PAFAH1B1 (beta), PAFAH1B2 (alpha2) and PAFAH1B3 (alpha1) subunits. The catalytic activity of the enzyme resides in the alpha1 (PAFAH1B3) and alpha2 (PAFAH1B2) subunits, whereas the beta subunit (PAFAH1B1) has regulatory activity. Trimer formation is not essential for the catalytic activity. Interacts with VLDLR; this interaction may modulate the Reelin pathway. As to expression, expressed in brain, spleen, lung, liver, kidney and testis. Not expressed in heart and skeletal muscle. Expressed in fetal brain as heterodimer. Not expressed in adult tissues. Expressed exclusively in granule cells.

The protein localises to the cytoplasm. It catalyses the reaction a 1-O-alkyl-2-acetyl-sn-glycero-3-phosphocholine + H2O = a 1-O-alkyl-sn-glycero-3-phosphocholine + acetate + H(+). The catalysed reaction is 1-O-hexadecyl-2-acetyl-sn-glycero-3-phosphocholine + H2O = 1-O-hexadecyl-sn-glycero-3-phosphocholine + acetate + H(+). The enzyme catalyses 1-O-hexadecyl-2-acetyl-sn-glycero-3-phosphate + H2O = 1-O-hexadecyl-sn-glycero-3-phosphate + acetate + H(+). Beta subunit (PAFAH1B1) inhibits the acetylhydrolase activity of the alpha1/alpha1 catalytic homodimer. Functionally, alpha1 catalytic subunit of the cytosolic type I platelet-activating factor (PAF) acetylhydrolase (PAF-AH (I)) heterotetrameric enzyme that catalyzes the hydrolyze of the acetyl group at the sn-2 position of PAF and its analogs and modulates the action of PAF. The activity and substrate specificity of PAF-AH (I) are affected by its subunit composition. Both alpha1/alpha1 homodimer (PAFAH1B3/PAFAH1B3 homodimer) and alpha1/alpha2 heterodimer(PAFAH1B3/PAFAH1B2 heterodimer) hydrolyze 1-O-alkyl-2-acetyl-sn-glycero-3-phosphoric acid (AAGPA) more efficiently than PAF, but they have little hydrolytic activity towards 1-O-alkyl-2-acetyl-sn-glycero-3-phosphorylethanolamine (AAGPE). Plays an important role during the development of brain. In Rattus norvegicus (Rat), this protein is Platelet-activating factor acetylhydrolase IB subunit alpha1.